The chain runs to 1374 residues: Probable multidrug resistance-associated protein lethal(2)03659 (1374 aa).

Residues 1–40 (MDKQPVLEPTFDSVSERENTSIEESSLLENNGFDHRNKDE) are disordered. 6 helical membrane passes run 159 to 179 (LLRV…VVEL), 205 to 225 (AGFY…MILT), 282 to 302 (YTVH…YLMY), 305 to 325 (IGIS…IQMY), 404 to 424 (IFLS…EIAF), and 426 to 446 (ITAY…SAII). The region spanning 168-449 (GFPGLAIFVV…YVPSAIIQTA (282 aa)) is the ABC transmembrane type-1 1 domain. The disordered stretch occupies residues 466 to 492 (ELGSSDKSEGPSKDTVPGNPPSNNNEA). Residues 499–722 (ISIRDLKAKW…GLITGLGSLS (224 aa)) form the ABC transporter 1 domain. 534 to 541 (GLTGSGKS) is a binding site for ATP. N-linked (GlcNAc...) asparagine glycosylation occurs at Asn561. The segment at 723 to 766 (KTDKAKTEEQEPLNLNSPDNKNEVTPIKENSEQTVGGSSSGKEH) is disordered. 5 helical membrane-spanning segments follow: residues 787–807 (GGGL…QVAV), 845–865 (LIII…FNIA), 913–933 (VVLV…IVIA), 938–958 (LLLV…NLYL), and 1025–1045 (YCMN…FFAF). The 287-residue stretch at 793–1079 (FLVMLSSSVL…GVRQTAELEN (287 aa)) folds into the ABC transmembrane type-1 2 domain. The ABC transporter 2 domain maps to 1119–1352 (FKELNLRYTP…SDSKVFHNLV (234 aa)). 1153 to 1160 (GRTGAGKS) contributes to the ATP binding site. Asn1254 and Asn1353 each carry an N-linked (GlcNAc...) asparagine glycan.

Belongs to the ABC transporter superfamily. ABCC family. Conjugate transporter (TC 3.A.1.208) subfamily. Uniform expression in embryos.

Its subcellular location is the membrane. Vital for development. The sequence is that of Probable multidrug resistance-associated protein lethal(2)03659 (l(2)03659) from Drosophila melanogaster (Fruit fly).